The following is a 103-amino-acid chain: Nucleoid-associated protein BH0035 (103 aa).

The segment covering 1–20 has biased composition (low complexity); sequence MKNMGQMMKQMQKMQKQMMK. The tract at residues 1 to 29 is disordered; the sequence is MKNMGQMMKQMQKMQKQMMKAQEELKEKT.

It belongs to the YbaB/EbfC family. As to quaternary structure, homodimer.

The protein localises to the cytoplasm. The protein resides in the nucleoid. Binds to DNA and alters its conformation. May be involved in regulation of gene expression, nucleoid organization and DNA protection. This Halalkalibacterium halodurans (strain ATCC BAA-125 / DSM 18197 / FERM 7344 / JCM 9153 / C-125) (Bacillus halodurans) protein is Nucleoid-associated protein BH0035.